Consider the following 153-residue polypeptide: MDQAELARIFQMFDRNGDGKITKQELNDSLENLGIYIPDKDLVQMIEKIDLNGDGYVDIEEFGGLYQTIMEERDEEEDMREAFNVFDQNRDGFITVEELRSVLASLGLKQGRTLEDCKRMISKVDVDGDGMVNFKEFKQMMKGGGFAALGSNL.

4 EF-hand domains span residues 1–36 (MDQAELARIFQMFDRNGDGKITKQELNDSLENLGIY), 37–72 (IPDKDLVQMIEKIDLNGDGYVDIEEFGGLYQTIMEE), 74–109 (DEEEDMREAFNVFDQNRDGFITVEELRSVLASLGLK), and 112–147 (RTLEDCKRMISKVDVDGDGMVNFKEFKQMMKGGGFA). Residues Asp-14, Asn-16, Asp-18, Lys-20, Glu-25, Asp-50, Asn-52, Asp-54, Tyr-56, Glu-61, Asp-87, Asn-89, Asp-91, Glu-98, Asp-125, Asp-127, Asp-129, Met-131, and Glu-136 each coordinate Ca(2+).

This sequence belongs to the calmodulin family.

Potential calcium sensor. The polypeptide is Calmodulin-like protein 3 (CML3) (Arabidopsis thaliana (Mouse-ear cress)).